A 690-amino-acid chain; its full sequence is Glutamate--cysteine ligase (690 aa).

Composition is skewed to low complexity over residues 574–585 (QQQNGHVNNNNN) and 598–619 (NGSTTTTNGTNSGSGITETNGT). Positions 574-620 (QQQNGHVNNNNNNDKKTKNDPIIVNGSTTTTNGTNSGSGITETNGTM) are disordered.

Belongs to the glutamate--cysteine ligase type 3 family.

It catalyses the reaction L-cysteine + L-glutamate + ATP = gamma-L-glutamyl-L-cysteine + ADP + phosphate + H(+). It functions in the pathway sulfur metabolism; glutathione biosynthesis; glutathione from L-cysteine and L-glutamate: step 1/2. This Candida albicans (Yeast) protein is Glutamate--cysteine ligase (GCS1).